Consider the following 254-residue polypeptide: Esterase YbfF (254 aa).

Residues Ser-89 and His-234 contribute to the active site.

Belongs to the DmpD/TodF/XylF esterase family.

Displays esterase activity toward palmitoyl-CoA, malonyl-CoA and pNP-butyrate. The polypeptide is Esterase YbfF (ybfF) (Escherichia coli (strain K12)).